The primary structure comprises 130 residues: Small ribosomal subunit protein uS11c (130 aa).

The protein belongs to the universal ribosomal protein uS11 family. As to quaternary structure, part of the 30S ribosomal subunit.

The protein localises to the plastid. It localises to the chloroplast. This is Small ribosomal subunit protein uS11c from Spirogyra maxima (Green alga).